Consider the following 752-residue polypeptide: Phosphoribosylformylglycinamidine synthase subunit PurL (752 aa).

Residue H58 is part of the active site. 2 residues coordinate ATP: Y61 and K103. E105 is a Mg(2+) binding site. Substrate contacts are provided by residues S106–H109 and R128. The active-site Proton acceptor is H107. A Mg(2+)-binding site is contributed by D129. Q253 is a substrate binding site. Mg(2+) is bound at residue D281. E325 to Q327 provides a ligand contact to substrate. Residues D513 and G550 each coordinate ATP. N551 contacts Mg(2+). Residue S553 participates in substrate binding.

The protein belongs to the FGAMS family. As to quaternary structure, monomer. Part of the FGAM synthase complex composed of 1 PurL, 1 PurQ and 2 PurS subunits.

It localises to the cytoplasm. It catalyses the reaction N(2)-formyl-N(1)-(5-phospho-beta-D-ribosyl)glycinamide + L-glutamine + ATP + H2O = 2-formamido-N(1)-(5-O-phospho-beta-D-ribosyl)acetamidine + L-glutamate + ADP + phosphate + H(+). Its pathway is purine metabolism; IMP biosynthesis via de novo pathway; 5-amino-1-(5-phospho-D-ribosyl)imidazole from N(2)-formyl-N(1)-(5-phospho-D-ribosyl)glycinamide: step 1/2. Part of the phosphoribosylformylglycinamidine synthase complex involved in the purines biosynthetic pathway. Catalyzes the ATP-dependent conversion of formylglycinamide ribonucleotide (FGAR) and glutamine to yield formylglycinamidine ribonucleotide (FGAM) and glutamate. The FGAM synthase complex is composed of three subunits. PurQ produces an ammonia molecule by converting glutamine to glutamate. PurL transfers the ammonia molecule to FGAR to form FGAM in an ATP-dependent manner. PurS interacts with PurQ and PurL and is thought to assist in the transfer of the ammonia molecule from PurQ to PurL. The sequence is that of Phosphoribosylformylglycinamidine synthase subunit PurL from Streptomyces coelicolor (strain ATCC BAA-471 / A3(2) / M145).